The chain runs to 402 residues: Putative RNA-guided DNA endonuclease InsQ (402 aa).

Active-site residues include D183 and E267. Zn(2+)-binding residues include C334, C337, C353, and C356. The active site involves D363.

In the N-terminal section; belongs to the transposase 2 family. The protein in the C-terminal section; belongs to the transposase 35 family.

Its function is as follows. An RNA-guided dsDNA endonuclease. When guided by an RNA derived from the right-end element of its insertion sequence element (IS), cleaves DNA downstream of the transposon-associated motif (TAM). Cleaves supercoiled and linear DNA in a staggered manner 15-21 bases from the TAM yielding 5'-overhangs. Binds reRNA, an approximately 150 nucleotide base sRNA derived from the 3' end of its own gene, the right end (RE) of the insertion sequence (IS) plus sequence downstream of the IS. Functionally, not required for transposition of the insertion element. The corresponding transposase in strains MG1655 and W3110 is a truncated pseudogene (yncK). This is Putative RNA-guided DNA endonuclease InsQ (insQ) from Escherichia coli (strain K12).